The following is a 229-amino-acid chain: NAD(P)H-quinone oxidoreductase subunit K, chloroplastic (229 aa).

Residues C43, C44, C108, and C139 each coordinate [4Fe-4S] cluster.

The protein belongs to the complex I 20 kDa subunit family. As to quaternary structure, NDH is composed of at least 16 different subunits, 5 of which are encoded in the nucleus. It depends on [4Fe-4S] cluster as a cofactor.

Its subcellular location is the plastid. It is found in the chloroplast thylakoid membrane. The catalysed reaction is a plastoquinone + NADH + (n+1) H(+)(in) = a plastoquinol + NAD(+) + n H(+)(out). The enzyme catalyses a plastoquinone + NADPH + (n+1) H(+)(in) = a plastoquinol + NADP(+) + n H(+)(out). NDH shuttles electrons from NAD(P)H:plastoquinone, via FMN and iron-sulfur (Fe-S) centers, to quinones in the photosynthetic chain and possibly in a chloroplast respiratory chain. The immediate electron acceptor for the enzyme in this species is believed to be plastoquinone. Couples the redox reaction to proton translocation, and thus conserves the redox energy in a proton gradient. The polypeptide is NAD(P)H-quinone oxidoreductase subunit K, chloroplastic (Piper cenocladum (Ant piper)).